The primary structure comprises 284 residues: Probable endonuclease 4 (284 aa).

Zn(2+)-binding residues include H69, H109, E145, D179, H182, H216, D229, H231, and E261.

Belongs to the AP endonuclease 2 family. Zn(2+) serves as cofactor.

It carries out the reaction Endonucleolytic cleavage to 5'-phosphooligonucleotide end-products.. Endonuclease IV plays a role in DNA repair. It cleaves phosphodiester bonds at apurinic or apyrimidinic (AP) sites, generating a 3'-hydroxyl group and a 5'-terminal sugar phosphate. The protein is Probable endonuclease 4 of Klebsiella pneumoniae (strain 342).